The sequence spans 439 residues: tRNA-2-methylthio-N(6)-dimethylallyladenosine synthase (439 aa).

The 118-residue stretch at 2 to 119 (KKLYLKTHGC…LPDLLDSVIQ (118 aa)) folds into the MTTase N-terminal domain. 6 residues coordinate [4Fe-4S] cluster: C11, C48, C82, C156, C160, and C163. One can recognise a Radical SAM core domain in the interval 142-374 (RAEGPSAFVS…QNRINVKAAE (233 aa)). Positions 377–439 (QSMVGTQQRI…RPYSLWGEIC (63 aa)) constitute a TRAM domain.

It belongs to the methylthiotransferase family. MiaB subfamily. Monomer. The cofactor is [4Fe-4S] cluster.

It localises to the cytoplasm. It catalyses the reaction N(6)-dimethylallyladenosine(37) in tRNA + (sulfur carrier)-SH + AH2 + 2 S-adenosyl-L-methionine = 2-methylsulfanyl-N(6)-dimethylallyladenosine(37) in tRNA + (sulfur carrier)-H + 5'-deoxyadenosine + L-methionine + A + S-adenosyl-L-homocysteine + 2 H(+). In terms of biological role, catalyzes the methylthiolation of N6-(dimethylallyl)adenosine (i(6)A), leading to the formation of 2-methylthio-N6-(dimethylallyl)adenosine (ms(2)i(6)A) at position 37 in tRNAs that read codons beginning with uridine. The chain is tRNA-2-methylthio-N(6)-dimethylallyladenosine synthase from Coxiella burnetii (strain Dugway 5J108-111).